A 78-amino-acid polypeptide reads, in one-letter code: Small ribosomal subunit protein bS18 (78 aa).

Belongs to the bacterial ribosomal protein bS18 family. As to quaternary structure, part of the 30S ribosomal subunit. Forms a tight heterodimer with protein bS6.

Binds as a heterodimer with protein bS6 to the central domain of the 16S rRNA, where it helps stabilize the platform of the 30S subunit. This chain is Small ribosomal subunit protein bS18, found in Kocuria rhizophila (strain ATCC 9341 / DSM 348 / NBRC 103217 / DC2201).